A 103-amino-acid polypeptide reads, in one-letter code: UPF0122 protein FN1394 (103 aa).

Belongs to the UPF0122 family.

Might take part in the signal recognition particle (SRP) pathway. This is inferred from the conservation of its genetic proximity to ftsY/ffh. May be a regulatory protein. The sequence is that of UPF0122 protein FN1394 from Fusobacterium nucleatum subsp. nucleatum (strain ATCC 25586 / DSM 15643 / BCRC 10681 / CIP 101130 / JCM 8532 / KCTC 2640 / LMG 13131 / VPI 4355).